Reading from the N-terminus, the 95-residue chain is MSLSEKQINQIAYLARLSLNEVQLKNNTQDLNAIFSLIEQLANIETDGIEPMLHPLHMFQRLRKDVVIEKEQSVLFQSVAPKTRNGYYLVPTVIE.

The protein belongs to the GatC family. In terms of assembly, heterotrimer of A, B and C subunits.

The enzyme catalyses L-glutamyl-tRNA(Gln) + L-glutamine + ATP + H2O = L-glutaminyl-tRNA(Gln) + L-glutamate + ADP + phosphate + H(+). It carries out the reaction L-aspartyl-tRNA(Asn) + L-glutamine + ATP + H2O = L-asparaginyl-tRNA(Asn) + L-glutamate + ADP + phosphate + 2 H(+). In terms of biological role, allows the formation of correctly charged Asn-tRNA(Asn) or Gln-tRNA(Gln) through the transamidation of misacylated Asp-tRNA(Asn) or Glu-tRNA(Gln) in organisms which lack either or both of asparaginyl-tRNA or glutaminyl-tRNA synthetases. The reaction takes place in the presence of glutamine and ATP through an activated phospho-Asp-tRNA(Asn) or phospho-Glu-tRNA(Gln). In Ruthia magnifica subsp. Calyptogena magnifica, this protein is Aspartyl/glutamyl-tRNA(Asn/Gln) amidotransferase subunit C.